The chain runs to 51 residues: Probable antitoxin PhoAT (51 aa).

It belongs to the PhoAT antitoxin family. Interacts with toxin PhoH2.

Functionally, antitoxin component of a type II toxin-antitoxin (TA) system. The cognate antitoxin is PhoAT; the toxin gene cannot be expressed in the absence of the antitoxin gene in M.smegmatis (strain mc(2)4517), and abrogates the toxic effects of PhoH2 in M.smegmatis strain mc(2)155. The polypeptide is Probable antitoxin PhoAT (Mycobacterium tuberculosis (strain ATCC 25618 / H37Rv)).